The chain runs to 499 residues: DNA-directed RNA polymerase subunit Rpo2N (499 aa).

This sequence belongs to the RNA polymerase beta chain family. As to quaternary structure, part of the RNA polymerase complex.

The protein resides in the cytoplasm. It catalyses the reaction RNA(n) + a ribonucleoside 5'-triphosphate = RNA(n+1) + diphosphate. In terms of biological role, DNA-dependent RNA polymerase (RNAP) catalyzes the transcription of DNA into RNA using the four ribonucleoside triphosphates as substrates. The Rpo2 subunit (Rpo2N and Rpo2C in this organism) is implicated in DNA promoter recognition and in nucleotide binding. This chain is DNA-directed RNA polymerase subunit Rpo2N, found in Methanococcus vannielii (strain ATCC 35089 / DSM 1224 / JCM 13029 / OCM 148 / SB).